The chain runs to 74 residues: Conotoxin VnMEKL-0221 (74 aa).

A signal peptide spans 1 to 19; the sequence is MEKLTILLLVAAVLMWTQA. Positions 20 to 46 are excised as a propeptide; the sequence is LIQEKRPKEKIKFLSKRKTTAESWWEG. Disulfide bonds link Cys-48-Cys-62, Cys-55-Cys-66, and Cys-61-Cys-71.

The protein belongs to the conotoxin O2 superfamily. In terms of tissue distribution, expressed by the venom duct.

It localises to the secreted. This Conus ventricosus (Mediterranean cone) protein is Conotoxin VnMEKL-0221.